A 511-amino-acid polypeptide reads, in one-letter code: 2-isopropylmalate synthase (511 aa).

Positions 5 to 267 constitute a Pyruvate carboxyltransferase domain; the sequence is LIIFDTTLRD…DTNIDTMHIL (263 aa). Asp14, His202, His204, and Asn238 together coordinate Mn(2+). The tract at residues 393-511 is regulatory domain; sequence KLVSLKVCTE…TVTNKAHPQI (119 aa).

The protein belongs to the alpha-IPM synthase/homocitrate synthase family. LeuA type 1 subfamily. In terms of assembly, homodimer. Mn(2+) is required as a cofactor.

The protein resides in the cytoplasm. It carries out the reaction 3-methyl-2-oxobutanoate + acetyl-CoA + H2O = (2S)-2-isopropylmalate + CoA + H(+). Its pathway is amino-acid biosynthesis; L-leucine biosynthesis; L-leucine from 3-methyl-2-oxobutanoate: step 1/4. Its function is as follows. Catalyzes the condensation of the acetyl group of acetyl-CoA with 3-methyl-2-oxobutanoate (2-ketoisovalerate) to form 3-carboxy-3-hydroxy-4-methylpentanoate (2-isopropylmalate). This chain is 2-isopropylmalate synthase, found in Vesicomyosocius okutanii subsp. Calyptogena okutanii (strain HA).